The chain runs to 163 residues: Nucleotide-binding protein NTHI1194 (163 aa).

It belongs to the YajQ family.

In terms of biological role, nucleotide-binding protein. The chain is Nucleotide-binding protein NTHI1194 from Haemophilus influenzae (strain 86-028NP).